The sequence spans 528 residues: Peptide chain release factor 3 (528 aa).

The tr-type G domain occupies 11 to 279 (EKRRTFAIIS…GLVEWAPKPL (269 aa)). Residues 20–27 (SHPDAGKT), 88–92 (DTPGH), and 142–145 (NKCD) each bind GTP.

The protein belongs to the TRAFAC class translation factor GTPase superfamily. Classic translation factor GTPase family. PrfC subfamily.

Its subcellular location is the cytoplasm. Its function is as follows. Increases the formation of ribosomal termination complexes and stimulates activities of RF-1 and RF-2. It binds guanine nucleotides and has strong preference for UGA stop codons. It may interact directly with the ribosome. The stimulation of RF-1 and RF-2 is significantly reduced by GTP and GDP, but not by GMP. In Psychromonas ingrahamii (strain DSM 17664 / CCUG 51855 / 37), this protein is Peptide chain release factor 3.